A 421-amino-acid polypeptide reads, in one-letter code: Phosphatidylinositol 5-phosphate 4-kinase type-2 gamma (421 aa).

At A2 the chain carries N-acetylalanine. The residue at position 26 (S26) is a Phosphoserine. A PIPK domain is found at 43–420 (AADPLVGVFL…RFLDFITNIF (378 aa)). The segment at 69–75 (VMLLPDD) is required for interaction with PIP5K1A. S349 is subject to Phosphoserine.

Interacts with PIP5K1A; the interaction inhibits PIP5K1A kinase activity. Phosphorylated, phosphorylation is induced by EGF.

Its subcellular location is the endoplasmic reticulum. It is found in the cytoplasm. It carries out the reaction a 1,2-diacyl-sn-glycero-3-phospho-(1D-myo-inositol-5-phosphate) + ATP = a 1,2-diacyl-sn-glycero-3-phospho-(1D-myo-inositol-4,5-bisphosphate) + ADP + H(+). The enzyme catalyses 1,2-dihexadecanoyl-sn-glycero-3-phospho-(1D-myo-inositol-5-phosphate) + ATP = 1,2-dihexadecanoyl-sn-glycero-3-phospho-(1D-myo-inositol-4,5-bisphosphate) + ADP + H(+). The catalysed reaction is 1,2-dihexadecanoyl-sn-glycero-3-phospho-(1D-myo-inositol-5-phosphate) + GTP = 1,2-dihexadecanoyl-sn-glycero-3-phospho-(1D-myo-inositol-4,5-bisphosphate) + GDP + H(+). Phosphatidylinositol 5-phosphate 4-kinase with low enzymatic activity. May be a GTP sensor, has higher GTP-dependent kinase activity than ATP-dependent kinase activity. PIP4Ks negatively regulate insulin signaling through a catalytic-independent mechanism. They interact with PIP5Ks and suppress PIP5K-mediated PtdIns(4,5)P2 synthesis and insulin-dependent conversion to PtdIns(3,4,5)P3. This Pongo abelii (Sumatran orangutan) protein is Phosphatidylinositol 5-phosphate 4-kinase type-2 gamma (PIP4K2C).